The chain runs to 872 residues: Potassium voltage-gated channel subfamily KQT member 3 (872 aa).

The disordered stretch occupies residues 1–43 (MGLKARRAAGAAGGGGDGGGGGGGAANPAGGDAAAAGDEERKV). Topologically, residues 1–120 (MGLKARRAAG…IYDALERPRG (120 aa)) are cytoplasmic. Gly residues predominate over residues 11–25 (AAGGGGDGGGGGGGA). The segment covering 26-36 (ANPAGGDAAAA) has biased composition (low complexity). Phosphothreonine is present on Thr81. A helical transmembrane segment spans residues 121 to 143 (WALLYHALVFLIVLGCLILAVLT). At 144-153 (TFKEYETVSG) the chain is on the extracellular side. A helical transmembrane segment spans residues 154–175 (DWLLLLETFAIFIFGAEFALRI). The Cytoplasmic segment spans residues 176 to 193 (WAAGCCCRYKGWRGRLKF). A helical transmembrane segment spans residues 194–213 (ARKPLCMLDIFVLIASVPVV). At 214–225 (AVGNQGNVLATS) the chain is on the extracellular side. The chain crosses the membrane as a helical; Voltage-sensor span at residues 226 to 244 (LRSLRFLQILRMLRMDRRG). Position 243 (Arg243) interacts with a 1,2-diacyl-sn-glycero-3-phospho-(1D-myo-inositol-4,5-bisphosphate). The Cytoplasmic portion of the chain corresponds to 245–256 (GTWKLLGSAICA). Thr246 carries the phosphothreonine modification. The helical transmembrane segment at 257–282 (HSKELITAWYIGFLTLILSSFLVYLV) threads the bilayer. Position 259 (Lys259) interacts with a 1,2-diacyl-sn-glycero-3-phospho-(1D-myo-inositol-4,5-bisphosphate). The Extracellular portion of the chain corresponds to 283 to 302 (EKDVPEVDAQGEEMKEEFET). Positions 303–315 (YADALWWGLITLA) form an intramembrane region, pore-forming. A Selectivity filter motif is present at residues 316–321 (TIGYGD). The Extracellular portion of the chain corresponds to 316–326 (TIGYGDKTPKT). The helical transmembrane segment at 327-353 (WEGRLIAATFSLIGVSFFALPAGILGS) threads the bilayer. The Cytoplasmic segment spans residues 354–872 (GLALKVQEQH…SVWTPSNKPI (519 aa)). The segment at 356–537 (ALKVQEQHRQ…RLYKKKFKET (182 aa)) is mediates interaction with calmodulin. Lys366 provides a ligand contact to a 1,2-diacyl-sn-glycero-3-phospho-(1D-myo-inositol-4,5-bisphosphate). 2 disordered regions span residues 575 to 611 (GPPSTPKHKKSQKGSAFTFPSQQSPRNEPYVARPSTS) and 764 to 872 (ADLQ…NKPI). Composition is skewed to polar residues over residues 587-600 (KGSAFTFPSQQSPR) and 843-872 (DPFTPSGSMPLSSTGDGISDSVWTPSNKPI).

The protein belongs to the potassium channel family. KQT (TC 1.A.1.15) subfamily. Kv7.3/KCNQ3 sub-subfamily. As to quaternary structure, heterotetramer with KCNQ2; forms heterotetrameric native M-channel responsible for the M-current. Interacts with calmodulin; the interaction is calcium-independent, constitutive and participates in the proper assembly of a functional M-channel. Heteromultimer with KCNQ5. May associate with KCNE2. Interacts with IQCJ-SCHIP1. Interacts (via the pore module) with SLC5A3/SMIT1; forms a coregulatory complex that alters ion selectivity, voltage dependence and gating kinetics of the channel. KCNQ2/KCNQ3 are ubiquitinated by NEDD4L. Ubiquitination leads to protein degradation. Degradation induced by NEDD4L is inhibited by USP36. As to expression, predominantly expressed in brain.

Its subcellular location is the cell membrane. It catalyses the reaction K(+)(in) = K(+)(out). It carries out the reaction Rb(+)(in) = Rb(+)(out). The catalysed reaction is Cs(+)(in) = Cs(+)(out). The enzyme catalyses Na(+)(in) = Na(+)(out). Phosphatidylinositol-4,5-bisphosphate (PIP2) potentiates the activation of KCNQ channels by enhancing the electro-mechanical coupling of the voltage-sensing domain (VSD) and the pore-forming domain (PD). In the closed state of the channel, PIP2 is anchored at the S2-S3 loop; upon channel activation, PIP2 interacts with the S4-S5 linker and is involved in channel gating. Calcium suppresses KCNQ2-KCNQ3 channel currents, with calcium-bound calmodulin inducing a change in channel configuration which leads to the reduction of channel affinity for PIP2 and subsequent current suppression. M-channel is activated by the anticonvulsant retigabine. Pore-forming subunit of the voltage-gated potassium (Kv) M-channel which is responsible for the M-current, a key controller of neuronal excitability. M-channel is composed of pore-forming subunits KCNQ2 and KCNQ3 assembled as heterotetramers. The native M-current has a slowly activating and deactivating potassium conductance which plays a critical role in determining the subthreshold electrical excitability of neurons as well as the responsiveness to synaptic inputs. M-channel is selectively permeable in vitro to other cations besides potassium, in decreasing order of affinity K(+) &gt; Rb(+) &gt; Cs(+) &gt; Na(+). M-channel association with SLC5A3/SMIT1 alters channel ion selectivity, increasing Na(+) and Cs(+) permeation relative to K(+). Suppressed by activation of M1 muscarinic acetylcholine receptors. KCNQ3 also associates with KCNQ5 to form a functional channel in vitro and may also contribute to the M-current in brain. The protein is Potassium voltage-gated channel subfamily KQT member 3 of Homo sapiens (Human).